We begin with the raw amino-acid sequence, 61 residues long: Metallothionein-2B (61 aa).

Methionine 1 is subject to N-acetylmethionine. Residues 1 to 29 (MDPNCSCATGDSCTCASSCKCKECKCTSC) are beta. A divalent metal cation is bound by residues cysteine 5, cysteine 7, cysteine 13, cysteine 15, cysteine 19, cysteine 21, cysteine 24, cysteine 26, cysteine 29, cysteine 33, cysteine 34, cysteine 36, cysteine 37, cysteine 41, cysteine 44, cysteine 48, cysteine 50, cysteine 57, cysteine 59, and cysteine 60. The interval 30–61 (KKSCCSCCPAGCTKCAQGCICKGASDKCSCCA) is alpha.

It belongs to the metallothionein superfamily. Type 1 family. As to quaternary structure, monomer.

Its function is as follows. Metallothioneins have a high content of cysteine residues that bind various heavy metals; these proteins are transcriptionally regulated by both heavy metals and glucocorticoids. The polypeptide is Metallothionein-2B (Oryctolagus cuniculus (Rabbit)).